The following is a 109-amino-acid chain: ATPase inhibitor, mitochondrial (109 aa).

The transit peptide at 1 to 22 (MAGSSSLLRAGIRNVLLMQMRR) directs the protein to the mitochondrion. The N-terminal inhibitory region stretch occupies residues 27–56 (LGELGKGAGKGGGGGGSVREAGGAFGKRQA). Residues 27–109 (LGELGKGAGK…KSKIKKLNDD (83 aa)) form a disordered region. Residues 30–43 (LGKGAGKGGGGGGS) are compositionally biased toward gly residues. Basic and acidic residues-rich tracts occupy residues 55 to 69 (QAAE…KEQE) and 77 to 98 (HHEE…EIER). Residues 71 to 109 (IASLRKHHEEEIRHHKGEIERLQKEIERHKSKIKKLNDD) adopt a coiled-coil conformation. Residues 78-109 (HEEEIRHHKGEIERLQKEIERHKSKIKKLNDD) are antiparallel alpha-helical coiled coil region. Over residues 99–109 (HKSKIKKLNDD) the composition is skewed to basic residues.

Belongs to the ATPase inhibitor family. In terms of assembly, homodimer; represents the active form and is present at a pH value below 6.5. Homotetramer; represents the inactive form and is present at a pH value above 7.0.

It localises to the mitochondrion. Endogenous F(1)F(o)-ATPase inhibitor limiting ATP depletion when the mitochondrial membrane potential falls below a threshold and the F(1)F(o)-ATP synthase starts hydrolyzing ATP to pump protons out of the mitochondrial matrix. Required to avoid the consumption of cellular ATP when the F(1)F(o)-ATP synthase enzyme acts as an ATP hydrolase. Indirectly acts as a regulator of heme synthesis in erythroid tissues: regulates heme synthesis by modulating the mitochondrial pH and redox potential, allowing fech to efficiently catalyze the incorporation of iron into protoporphyrin IX to produce heme. This is ATPase inhibitor, mitochondrial from Xenopus tropicalis (Western clawed frog).